The sequence spans 938 residues: ATP-dependent 6-phosphofructokinase subunit beta (938 aa).

Positions 1–552 (MTQSLPLLNG…HLDNFMAINS (552 aa)) are N-terminal catalytic PFK domain 1. Residues G185, 249–250 (RC), and 279–282 (GDGS) contribute to the ATP site. Mg(2+) is bound at residue D280. Residues 325-327 (SID), R362, 369-371 (MGR), E426, R454, and 460-463 (HVQR) each bind beta-D-fructose 6-phosphate. D327 (proton acceptor) is an active-site residue. Residues 553–566 (ADHIEPKLPEHTHM) are interdomain linker. Residues 567-938 (KIAIVNVGAP…ADHLVGRKKL (372 aa)) are C-terminal regulatory PFK domain 2. Beta-D-fructose 2,6-bisphosphate contacts are provided by residues R637, 695-699 (TLSNN), R733, 740-742 (QGG), K826, 832-835 (HVQQ), and R915.

Belongs to the phosphofructokinase type A (PFKA) family. ATP-dependent PFK group I subfamily. Eukaryotic two domain clade 'E' sub-subfamily. In terms of assembly, heterooctamer of 4 alpha and 4 beta chains. Mg(2+) serves as cofactor.

The protein resides in the cytoplasm. It catalyses the reaction beta-D-fructose 6-phosphate + ATP = beta-D-fructose 1,6-bisphosphate + ADP + H(+). It functions in the pathway carbohydrate degradation; glycolysis; D-glyceraldehyde 3-phosphate and glycerone phosphate from D-glucose: step 3/4. Allosterically activated by ADP, AMP, or fructose 2,6-bisphosphate, and allosterically inhibited by ATP or citrate. Catalyzes the phosphorylation of D-fructose 6-phosphate to fructose 1,6-bisphosphate by ATP, the first committing step of glycolysis. In Kluyveromyces lactis (strain ATCC 8585 / CBS 2359 / DSM 70799 / NBRC 1267 / NRRL Y-1140 / WM37) (Yeast), this protein is ATP-dependent 6-phosphofructokinase subunit beta (PFK2).